A 314-amino-acid chain; its full sequence is DNA topoisomerase 1B (314 aa).

In terms of domain architecture, Topo IB-type catalytic spans valine 77–glycine 314. Catalysis depends on tyrosine 274, which acts as the O-(3'-phospho-DNA)-tyrosine intermediate.

It belongs to the type IB topoisomerase family.

It carries out the reaction ATP-independent breakage of single-stranded DNA, followed by passage and rejoining.. In terms of biological role, releases the supercoiling and torsional tension of DNA introduced during the DNA replication and transcription by transiently cleaving and rejoining one strand of the DNA duplex. Introduces a single-strand break via transesterification at the specific target site 5'-[CT]CCTTp site in duplex DNA. The scissile phosphodiester is attacked by the catalytic tyrosine of the enzyme, resulting in the formation of a DNA-(3'-phosphotyrosyl)-enzyme intermediate and the expulsion of a 5'-OH DNA strand. The free DNA strand then undergoes passage around the unbroken strand thus removing DNA supercoils. Finally, in the religation step, the DNA 5'-OH attacks the covalent intermediate to expel the active-site tyrosine and restore the DNA phosphodiester backbone. The polypeptide is DNA topoisomerase 1B (TOP1) (Vaccinia virus (strain Ankara) (VACV)).